We begin with the raw amino-acid sequence, 495 residues long: Steroid 21-hydroxylase (495 aa).

R92 and K121 together coordinate heme b. R234 provides a ligand contact to 17alpha-hydroxyprogesterone. A progesterone-binding site is contributed by R234. Positions 366, 427, and 429 each coordinate heme b.

Belongs to the cytochrome P450 family. Heme b serves as cofactor.

Its subcellular location is the endoplasmic reticulum membrane. The protein localises to the microsome membrane. It carries out the reaction progesterone + reduced [NADPH--hemoprotein reductase] + O2 = 21-hydroxyprogesterone + oxidized [NADPH--hemoprotein reductase] + H2O + H(+). The catalysed reaction is 17alpha-hydroxyprogesterone + reduced [NADPH--hemoprotein reductase] + O2 = 11-deoxycortisol + oxidized [NADPH--hemoprotein reductase] + H2O + H(+). Its function is as follows. A cytochrome P450 monooxygenase that plays a major role in adrenal steroidogenesis. Catalyzes the hydroxylation at C-21 of progesterone and 17alpha-hydroxyprogesterone to respectively form 11-deoxycorticosterone and 11-deoxycortisol, intermediate metabolites in the biosynthetic pathway of mineralocorticoids and glucocorticoids. Mechanistically, uses molecular oxygen inserting one oxygen atom into a substrate, and reducing the second into a water molecule, with two electrons provided by NADPH via cytochrome P450 reductase (CPR; NADPH-ferrihemoprotein reductase). This chain is Steroid 21-hydroxylase (CYP21A2), found in Homo sapiens (Human).